The following is a 29-amino-acid chain: Cytochrome b6-f complex subunit 8 (29 aa).

A helical transmembrane segment spans residues 3–23 (IVSLAWAVLMVVFTFSLSLVV).

It belongs to the PetN family. In terms of assembly, the 4 large subunits of the cytochrome b6-f complex are cytochrome b6, subunit IV (17 kDa polypeptide, PetD), cytochrome f and the Rieske protein, while the 4 small subunits are PetG, PetL, PetM and PetN. The complex functions as a dimer.

It is found in the plastid. The protein localises to the chloroplast thylakoid membrane. Its function is as follows. Component of the cytochrome b6-f complex, which mediates electron transfer between photosystem II (PSII) and photosystem I (PSI), cyclic electron flow around PSI, and state transitions. In Drimys granadensis, this protein is Cytochrome b6-f complex subunit 8.